The chain runs to 497 residues: Cytosol aminopeptidase (497 aa).

Residues lysine 267 and aspartate 272 each coordinate Mn(2+). The active site involves lysine 279. Residues aspartate 290, aspartate 349, and glutamate 351 each coordinate Mn(2+). Residue arginine 353 is part of the active site.

It belongs to the peptidase M17 family. It depends on Mn(2+) as a cofactor.

The protein resides in the cytoplasm. It catalyses the reaction Release of an N-terminal amino acid, Xaa-|-Yaa-, in which Xaa is preferably Leu, but may be other amino acids including Pro although not Arg or Lys, and Yaa may be Pro. Amino acid amides and methyl esters are also readily hydrolyzed, but rates on arylamides are exceedingly low.. It carries out the reaction Release of an N-terminal amino acid, preferentially leucine, but not glutamic or aspartic acids.. Functionally, presumably involved in the processing and regular turnover of intracellular proteins. Catalyzes the removal of unsubstituted N-terminal amino acids from various peptides. This is Cytosol aminopeptidase (pepA) from Pseudomonas putida (Arthrobacter siderocapsulatus).